We begin with the raw amino-acid sequence, 358 residues long: Peptide chain release factor 1 (358 aa).

Q236 is subject to N5-methylglutamine.

The protein belongs to the prokaryotic/mitochondrial release factor family. In terms of processing, methylated by PrmC. Methylation increases the termination efficiency of RF1.

It localises to the cytoplasm. Peptide chain release factor 1 directs the termination of translation in response to the peptide chain termination codons UAG and UAA. The sequence is that of Peptide chain release factor 1 from Corynebacterium efficiens (strain DSM 44549 / YS-314 / AJ 12310 / JCM 11189 / NBRC 100395).